Reading from the N-terminus, the 257-residue chain is ATP synthase delta chain, chloroplastic (257 aa).

A chloroplast-targeting transit peptide spans 1 to 70 (MAALQNPVAL…PRGGALGTRM (70 aa)).

Belongs to the ATPase delta chain family. F-type ATPases have 2 components, CF(1) - the catalytic core - and CF(0) - the membrane proton channel. CF(1) has five subunits: alpha(3), beta(3), gamma(1), delta(1), epsilon(1). CF(0) has three main subunits: a, b and c.

It localises to the plastid. Its subcellular location is the chloroplast thylakoid membrane. This protein seems to be part of the stalk that links CF(0) to CF(1). It either transmits conformational changes from CF(0) into CF(1) or is implicated in proton conduction. This Spinacia oleracea (Spinach) protein is ATP synthase delta chain, chloroplastic (ATPD).